A 293-amino-acid polypeptide reads, in one-letter code: Homoserine kinase (293 aa).

84-94 (PLSRGLGSSSA) is an ATP binding site.

It belongs to the GHMP kinase family. Homoserine kinase subfamily.

It is found in the cytoplasm. It carries out the reaction L-homoserine + ATP = O-phospho-L-homoserine + ADP + H(+). It functions in the pathway amino-acid biosynthesis; L-threonine biosynthesis; L-threonine from L-aspartate: step 4/5. Its function is as follows. Catalyzes the ATP-dependent phosphorylation of L-homoserine to L-homoserine phosphate. In Nautilia profundicola (strain ATCC BAA-1463 / DSM 18972 / AmH), this protein is Homoserine kinase.